Consider the following 120-residue polypeptide: Large ribosomal subunit protein bL17 (120 aa).

This sequence belongs to the bacterial ribosomal protein bL17 family. Part of the 50S ribosomal subunit. Contacts protein L32.

The protein is Large ribosomal subunit protein bL17 of Bacillus licheniformis (strain ATCC 14580 / DSM 13 / JCM 2505 / CCUG 7422 / NBRC 12200 / NCIMB 9375 / NCTC 10341 / NRRL NRS-1264 / Gibson 46).